A 510-amino-acid polypeptide reads, in one-letter code: ATP synthase subunit alpha (510 aa).

169–176 (GDRQTGKT) is a binding site for ATP.

Belongs to the ATPase alpha/beta chains family. F-type ATPases have 2 components, CF(1) - the catalytic core - and CF(0) - the membrane proton channel. CF(1) has five subunits: alpha(3), beta(3), gamma(1), delta(1), epsilon(1). CF(0) has three main subunits: a(1), b(2) and c(9-12). The alpha and beta chains form an alternating ring which encloses part of the gamma chain. CF(1) is attached to CF(0) by a central stalk formed by the gamma and epsilon chains, while a peripheral stalk is formed by the delta and b chains.

The protein resides in the cell inner membrane. The enzyme catalyses ATP + H2O + 4 H(+)(in) = ADP + phosphate + 5 H(+)(out). Produces ATP from ADP in the presence of a proton gradient across the membrane. The alpha chain is a regulatory subunit. This Methylobacterium radiotolerans (strain ATCC 27329 / DSM 1819 / JCM 2831 / NBRC 15690 / NCIMB 10815 / 0-1) protein is ATP synthase subunit alpha.